The primary structure comprises 251 residues: 5'-nucleotidase SurE 1 (251 aa).

A divalent metal cation is bound by residues D8, D9, S39, and N95.

Belongs to the SurE nucleotidase family. A divalent metal cation is required as a cofactor.

The protein localises to the cytoplasm. The enzyme catalyses a ribonucleoside 5'-phosphate + H2O = a ribonucleoside + phosphate. Its function is as follows. Nucleotidase that shows phosphatase activity on nucleoside 5'-monophosphates. This Thermus thermophilus (strain ATCC BAA-163 / DSM 7039 / HB27) protein is 5'-nucleotidase SurE 1.